We begin with the raw amino-acid sequence, 141 residues long: Nucleoside triphosphatase NudI (141 aa).

The Nudix hydrolase domain occupies 1-141 (MRQRTIVCPL…RKTLRLKGLL (141 aa)). Positions 38 to 59 (GGVEPGERIEEALRREIREELG) match the Nudix box motif.

This sequence belongs to the Nudix hydrolase family. NudI subfamily. Monomer. Mg(2+) serves as cofactor.

The catalysed reaction is a ribonucleoside 5'-triphosphate + H2O = a ribonucleoside 5'-phosphate + diphosphate + H(+). It catalyses the reaction a 2'-deoxyribonucleoside 5'-triphosphate + H2O = a 2'-deoxyribonucleoside 5'-phosphate + diphosphate + H(+). The enzyme catalyses dUTP + H2O = dUMP + diphosphate + H(+). It carries out the reaction dTTP + H2O = dTMP + diphosphate + H(+). The catalysed reaction is dCTP + H2O = dCMP + diphosphate + H(+). In terms of biological role, catalyzes the hydrolysis of nucleoside triphosphates, with a preference for pyrimidine deoxynucleoside triphosphates (dUTP, dTTP and dCTP). The polypeptide is Nucleoside triphosphatase NudI (Escherichia coli O17:K52:H18 (strain UMN026 / ExPEC)).